A 145-amino-acid chain; its full sequence is Large ribosomal subunit protein uL13 (145 aa).

Belongs to the universal ribosomal protein uL13 family. Part of the 50S ribosomal subunit.

In terms of biological role, this protein is one of the early assembly proteins of the 50S ribosomal subunit, although it is not seen to bind rRNA by itself. It is important during the early stages of 50S assembly. The sequence is that of Large ribosomal subunit protein uL13 from Listeria innocua serovar 6a (strain ATCC BAA-680 / CLIP 11262).